A 465-amino-acid polypeptide reads, in one-letter code: Mothers against decapentaplegic homolog 5 (465 aa).

At Thr-2 the chain carries N-acetylthreonine. Positions 13-137 (PAVKRLLGWK…YKRVESPVLP (125 aa)) constitute an MH1 domain. Cys-65, Cys-110, Cys-122, and His-127 together coordinate Zn(2+). Positions 163–249 (NEPHMPQNAT…PMDTSNNMIP (87 aa)) are disordered. The span at 169-182 (QNATFPDSFHQPNN) shows a compositional bias: polar residues. Residues 186–197 (PLSPNSPYPPSP) are compositionally biased toward pro residues. Residues 198-214 (ASSTYPNSPASSGPGSP) are compositionally biased toward low complexity. Residues 234–249 (GQDNSQPMDTSNNMIP) are compositionally biased toward polar residues. The MH2 domain maps to 271 to 465 (WCSIVYYELN…SPLNPISSVS (195 aa)). A phosphoserine mark is found at Ser-463 and Ser-465.

Belongs to the dwarfin/SMAD family. In terms of assembly, homodimer. Forms trimers with the co-SMAD SMAD4. Interacts with PEBP2-alpha subunit and SMURF1. Interacts with SUV39H1 and SUV39H2. Interacts (via MH2 domain) with LEMD3. Interacts with WWP1. Interacts with TMEM119. Interacts with ZNF8. Interacts with RANBP3L. Interacts with HK1. Interacts with HGS; this interaction attenuates BMP signaling. Post-translationally, phosphorylated on serine by BMP (bone morphogenetic proteins) type 1 receptor kinase. In terms of processing, ubiquitin-mediated proteolysis by SMAD-specific E3 ubiquitin ligase SMURF1. Ubiquitous.

The protein resides in the cytoplasm. Its subcellular location is the nucleus. The protein localises to the mitochondrion. In terms of biological role, transcriptional regulator that plays a role in various cellular processes including embryonic development, cell differentiation, angiogenesis and tissue homeostasis. Upon BMP ligand binding to their receptors at the cell surface, is phosphorylated by activated type I BMP receptors (BMPRIs) and associates with SMAD4 to form a heteromeric complex which translocates into the nucleus acting as transcription factor. In turn, the hetero-trimeric complex recognizes cis-regulatory elements containing Smad Binding Elements (SBEs) to modulate the outcome of the signaling network. Non-phosphorylated SMAD5 has a cytoplasmic role in energy metabolism regulation by promoting mitochondrial respiration and glycolysis in response to cytoplasmic pH changes. Mechanistically, interacts with hexokinase 1/HK1 and thereby accelerates glycolysis. The polypeptide is Mothers against decapentaplegic homolog 5 (SMAD5) (Homo sapiens (Human)).